A 320-amino-acid polypeptide reads, in one-letter code: Lipoyl synthase (320 aa).

Positions 67, 72, 78, 93, 97, 100, and 307 each coordinate [4Fe-4S] cluster. The 218-residue stretch at 79-296 (FNHGTATFMI…RDKANEMGFE (218 aa)) folds into the Radical SAM core domain.

The protein belongs to the radical SAM superfamily. Lipoyl synthase family. Requires [4Fe-4S] cluster as cofactor.

Its subcellular location is the cytoplasm. It carries out the reaction [[Fe-S] cluster scaffold protein carrying a second [4Fe-4S](2+) cluster] + N(6)-octanoyl-L-lysyl-[protein] + 2 oxidized [2Fe-2S]-[ferredoxin] + 2 S-adenosyl-L-methionine + 4 H(+) = [[Fe-S] cluster scaffold protein] + N(6)-[(R)-dihydrolipoyl]-L-lysyl-[protein] + 4 Fe(3+) + 2 hydrogen sulfide + 2 5'-deoxyadenosine + 2 L-methionine + 2 reduced [2Fe-2S]-[ferredoxin]. It participates in protein modification; protein lipoylation via endogenous pathway; protein N(6)-(lipoyl)lysine from octanoyl-[acyl-carrier-protein]: step 2/2. Functionally, catalyzes the radical-mediated insertion of two sulfur atoms into the C-6 and C-8 positions of the octanoyl moiety bound to the lipoyl domains of lipoate-dependent enzymes, thereby converting the octanoylated domains into lipoylated derivatives. In Haemophilus influenzae (strain PittEE), this protein is Lipoyl synthase.